The following is a 338-amino-acid chain: DNA-directed RNA polymerase subunit alpha (338 aa).

The tract at residues 1–234 (MIHKNWAELI…DQLSVFVNFD (234 aa)) is alpha N-terminal domain (alpha-NTD). An alpha C-terminal domain (alpha-CTD) region spans residues 250 to 338 (FDPRLLKKVD…DLAKRFDDQF (89 aa)).

It belongs to the RNA polymerase alpha chain family. Homodimer. The RNAP catalytic core consists of 2 alpha, 1 beta, 1 beta' and 1 omega subunit. When a sigma factor is associated with the core the holoenzyme is formed, which can initiate transcription.

The catalysed reaction is RNA(n) + a ribonucleoside 5'-triphosphate = RNA(n+1) + diphosphate. Functionally, DNA-dependent RNA polymerase catalyzes the transcription of DNA into RNA using the four ribonucleoside triphosphates as substrates. This is DNA-directed RNA polymerase subunit alpha from Paracoccus denitrificans (strain Pd 1222).